The primary structure comprises 379 residues: Glutamate 5-kinase (379 aa).

An ATP-binding site is contributed by Lys-15. Residues Ser-56, Asp-143, and Asn-155 each contribute to the substrate site. 175–176 (SD) lines the ATP pocket. Residues 281-358 (RGTLAIDAGA…SDAAQLLGVR (78 aa)) form the PUA domain.

It belongs to the glutamate 5-kinase family.

It localises to the cytoplasm. It carries out the reaction L-glutamate + ATP = L-glutamyl 5-phosphate + ADP. The protein operates within amino-acid biosynthesis; L-proline biosynthesis; L-glutamate 5-semialdehyde from L-glutamate: step 1/2. Functionally, catalyzes the transfer of a phosphate group to glutamate to form L-glutamate 5-phosphate. The protein is Glutamate 5-kinase of Nitrobacter winogradskyi (strain ATCC 25391 / DSM 10237 / CIP 104748 / NCIMB 11846 / Nb-255).